A 286-amino-acid polypeptide reads, in one-letter code: Haloalkane dehalogenase 2 (286 aa).

The 100-residue stretch at 35–134 folds into the AB hydrolase-1 domain; sequence PPILLCHGNP…RVRGVVLGNT (100 aa). Asp109 serves as the catalytic Nucleophile. The Proton donor role is filled by Asp238. Catalysis depends on His267, which acts as the Proton acceptor.

It belongs to the haloalkane dehalogenase family. Type 1 subfamily. As to quaternary structure, monomer.

It catalyses the reaction 1-haloalkane + H2O = a halide anion + a primary alcohol + H(+). Functionally, catalyzes hydrolytic cleavage of carbon-halogen bonds in halogenated aliphatic compounds, leading to the formation of the corresponding primary alcohols, halide ions and protons. This Mycobacterium bovis (strain ATCC BAA-935 / AF2122/97) protein is Haloalkane dehalogenase 2 (dhmA2).